A 388-amino-acid polypeptide reads, in one-letter code: MVVLHEILDGPNGDDPNNNPQEGEDNQNENPQEEVENLRNLLELPEELIERLIAHIPRCYYPYISLVSRDFRQVITSDKLFRTRSLLGFNEPVLYALIGSTQTPLSWFFLRWSNFPLELHRIRSLPTVLLGAAVVTIGYKMYVMGGTIGLNHHVSTVIVIDCRNHTWNYLPDMKRARYRAAAGEIGGRIYVIGGRKKQDADWVEVFNATTESWETVSSVCPNDASANGVFSTYVVMQGRIFALDRWGCFAYKPVQGLWQSWGVASELTRFWHPLSSFTVIGELLYTVDLTCSLGHPIVVYYPNESVWRPVMGFHLPILSQCWSKIANFGGKLVIFCTCLGTFKHILCIVIALEARQGGHIWGVVESNSRVFRDDMMLPYIRLCQTVTF.

A disordered region spans residues 6 to 33 (EILDGPNGDDPNNNPQEGEDNQNENPQE). Positions 9-21 (DGPNGDDPNNNPQ) are enriched in low complexity. Over residues 22-33 (EGEDNQNENPQE) the composition is skewed to acidic residues. The F-box domain maps to 38–84 (LRNLLELPEELIERLIAHIPRCYYPYISLVSRDFRQVITSDKLFRTR). Kelch repeat units lie at residues 140-187 (KMYV…EIGG) and 189-233 (IYVI…FSTY).

This chain is Putative F-box/kelch-repeat protein At2g29820, found in Arabidopsis thaliana (Mouse-ear cress).